Reading from the N-terminus, the 62-residue chain is UPF0337 protein mll8179 (62 aa).

The interval 1–42 (MRNMVNKDQVAGLAKQLKGSVKQAAGKATGNRRTQAEGMADK) is disordered.

The protein belongs to the UPF0337 (CsbD) family.

The chain is UPF0337 protein mll8179 from Mesorhizobium japonicum (strain LMG 29417 / CECT 9101 / MAFF 303099) (Mesorhizobium loti (strain MAFF 303099)).